The following is an 89-amino-acid chain: Small ribosomal subunit protein uS15 (89 aa).

Residues 1 to 23 are disordered; it reads MTLNTQEKQKLINTHQNHGTDTG.

The protein belongs to the universal ribosomal protein uS15 family. As to quaternary structure, part of the 30S ribosomal subunit. Forms a bridge to the 50S subunit in the 70S ribosome, contacting the 23S rRNA.

Its function is as follows. One of the primary rRNA binding proteins, it binds directly to 16S rRNA where it helps nucleate assembly of the platform of the 30S subunit by binding and bridging several RNA helices of the 16S rRNA. Functionally, forms an intersubunit bridge (bridge B4) with the 23S rRNA of the 50S subunit in the ribosome. This Prochlorococcus marinus (strain MIT 9211) protein is Small ribosomal subunit protein uS15.